A 244-amino-acid chain; its full sequence is 1-(5-phosphoribosyl)-5-[(5-phosphoribosylamino)methylideneamino] imidazole-4-carboxamide isomerase (244 aa).

D12 functions as the Proton acceptor in the catalytic mechanism. The active-site Proton donor is D131.

This sequence belongs to the HisA/HisF family.

It is found in the cytoplasm. The enzyme catalyses 1-(5-phospho-beta-D-ribosyl)-5-[(5-phospho-beta-D-ribosylamino)methylideneamino]imidazole-4-carboxamide = 5-[(5-phospho-1-deoxy-D-ribulos-1-ylimino)methylamino]-1-(5-phospho-beta-D-ribosyl)imidazole-4-carboxamide. It functions in the pathway amino-acid biosynthesis; L-histidine biosynthesis; L-histidine from 5-phospho-alpha-D-ribose 1-diphosphate: step 4/9. The polypeptide is 1-(5-phosphoribosyl)-5-[(5-phosphoribosylamino)methylideneamino] imidazole-4-carboxamide isomerase (Nocardioides sp. (strain ATCC BAA-499 / JS614)).